Reading from the N-terminus, the 246-residue chain is E3 ubiquitin-protein ligase MARCHF2 (246 aa).

Residues 56–116 form an RING-CH-type zinc finger; the sequence is DTPSDGPFCR…ELCHTEFAVE (61 aa). Residues 56–116 form a required for inhibition of HIV-1 virus production and VSV G protein expression region; that stretch reads DTPSDGPFCR…ELCHTEFAVE (61 aa). Cysteine 64, cysteine 67, cysteine 80, cysteine 82, histidine 90, cysteine 93, cysteine 106, and cysteine 109 together coordinate Zn(2+). A required for interaction with IKBKG region spans residues 121–246; sequence PLTEWLKDPG…LKKVAEETPV (126 aa). 2 helical membrane passes run 138–158 and 175–195; these read LCCDMVCFLFITPLAAISGWL and AVGLIALTIALFTIYVLWTLV.

In terms of assembly, interacts with STX6; the interaction promotes MARCHF2-mediated ubiquitination and degradation of CFTR. Interacts with MARCHF3. Interacts with GOPC/CAL; the interaction leads to CFTR ubiquitination and degradation. Interacts with CFTR; the interaction leads to CFTR ubiqtuitination and degradation. Interacts (via PDZ domain) with DLG1 (via PDZ domains); the interaction leads to DLG1 ubiqtuitination and degradation. Interacts with ERGIC3. Interacts with ADRB2. Interacts with IKBKG/NEMO; during the late stages of macrophage viral and bacterial infection; the interaction leads to ubiquitination and degradation of IKBKG/NEMO. In terms of tissue distribution, broadly expressed.

It is found in the endoplasmic reticulum membrane. The protein localises to the lysosome membrane. The protein resides in the endosome membrane. Its subcellular location is the golgi apparatus membrane. It localises to the cytoplasm. It is found in the cell membrane. It carries out the reaction S-ubiquitinyl-[E2 ubiquitin-conjugating enzyme]-L-cysteine + [acceptor protein]-L-lysine = [E2 ubiquitin-conjugating enzyme]-L-cysteine + N(6)-ubiquitinyl-[acceptor protein]-L-lysine.. Its pathway is protein modification; protein ubiquitination. Its function is as follows. E3 ubiquitin-protein ligase that may mediate ubiquitination of TFRC and CD86, and promote their subsequent endocytosis and sorting to lysosomes via multivesicular bodies. E3 ubiquitin ligases accept ubiquitin from an E2 ubiquitin-conjugating enzyme in the form of a thioester and then directly transfer the ubiquitin to targeted substrates. Together with GOPC/CAL mediates the ubiquitination and lysosomal degradation of CFTR. Ubiquitinates and therefore mediates the degradation of DLG1. Regulates the intracellular trafficking and secretion of alpha1-antitrypsin/SERPINA1 and HP/haptoglobin via ubiquitination and degradation of the cargo receptor ERGIC3. Negatively regulates the antiviral and antibacterial immune response by repression of the NF-kB and type 1 IFN signaling pathways, via MARCHF2-mediated K48-linked polyubiquitination of IKBKG/NEMO, resulting in its proteasomal degradation. May be involved in endosomal trafficking through interaction with STX6. Functionally, (Microbial infection) Positively regulates the degradation of Vesicular stomatitis virus (VSV) G protein via the lysosomal degradation pathway. Represses HIV-1 viral production and may inhibit the translocation of HIV-1 env to the cell surface, resulting in decreased viral cell-cell transmission. This Homo sapiens (Human) protein is E3 ubiquitin-protein ligase MARCHF2.